Here is a 148-residue protein sequence, read N- to C-terminus: SPbeta prophage-derived disulfide bond formation protein B (148 aa).

A helical membrane pass occupies residues 7 to 26 (KSFFLLLFFLSFFGTMASLF). C36 and C39 are joined by a disulfide. 2 helical membrane-spanning segments follow: residues 41 to 60 (YQRIFLYPIPIILLIGLLKK) and 67 to 84 (YVVFLSSIGLIIAFYHYI). C95 and C102 are disulfide-bonded. Residues 111–135 (GFITLPLMSSVCFALIFGIGLKLII) form a helical membrane-spanning segment.

The protein belongs to the DsbB family. BdbC subfamily.

The protein resides in the cell membrane. In terms of biological role, important but not absolutely essential for the production of the lantibiotic sublancin 168, it may also be required for the stability of other secreted proteins. Not required for competence for DNA uptake. The sequence is that of SPbeta prophage-derived disulfide bond formation protein B (bdbB) from Bacillus subtilis (strain 168).